A 665-amino-acid chain; its full sequence is Transketolase 1 (665 aa).

A substrate-binding site is contributed by histidine 26. Residues histidine 66 and 114 to 116 contribute to the thiamine diphosphate site; that span reads GPL. Position 155 (aspartate 155) interacts with Mg(2+). Thiamine diphosphate contacts are provided by glycine 156 and asparagine 185. Residues asparagine 185 and isoleucine 187 each contribute to the Mg(2+) site. Residues histidine 261, arginine 358, and serine 385 each coordinate substrate. Histidine 261 serves as a coordination point for thiamine diphosphate. Glutamate 412 serves as the catalytic Proton donor. Phenylalanine 438 contacts thiamine diphosphate. Substrate is bound by residues histidine 462, aspartate 470, and arginine 521.

Belongs to the transketolase family. Homodimer. It depends on Mg(2+) as a cofactor. Requires Ca(2+) as cofactor. Mn(2+) is required as a cofactor. Co(2+) serves as cofactor. The cofactor is thiamine diphosphate.

It catalyses the reaction D-sedoheptulose 7-phosphate + D-glyceraldehyde 3-phosphate = aldehydo-D-ribose 5-phosphate + D-xylulose 5-phosphate. In terms of biological role, catalyzes the transfer of a two-carbon ketol group from a ketose donor to an aldose acceptor, via a covalent intermediate with the cofactor thiamine pyrophosphate. The protein is Transketolase 1 (tkt1) of Vibrio cholerae serotype O1 (strain ATCC 39315 / El Tor Inaba N16961).